We begin with the raw amino-acid sequence, 165 residues long: Nucleotide-binding protein NATL1_05371 (165 aa).

The protein belongs to the YajQ family.

In terms of biological role, nucleotide-binding protein. The protein is Nucleotide-binding protein NATL1_05371 of Prochlorococcus marinus (strain NATL1A).